A 298-amino-acid polypeptide reads, in one-letter code: Glycine--tRNA ligase alpha subunit (298 aa).

Belongs to the class-II aminoacyl-tRNA synthetase family. As to quaternary structure, tetramer of two alpha and two beta subunits.

Its subcellular location is the cytoplasm. It catalyses the reaction tRNA(Gly) + glycine + ATP = glycyl-tRNA(Gly) + AMP + diphosphate. This Helicobacter hepaticus (strain ATCC 51449 / 3B1) protein is Glycine--tRNA ligase alpha subunit.